The primary structure comprises 603 residues: Proline--tRNA ligase (603 aa).

It belongs to the class-II aminoacyl-tRNA synthetase family. ProS type 1 subfamily. In terms of assembly, homodimer.

Its subcellular location is the cytoplasm. It carries out the reaction tRNA(Pro) + L-proline + ATP = L-prolyl-tRNA(Pro) + AMP + diphosphate. Its function is as follows. Catalyzes the attachment of proline to tRNA(Pro) in a two-step reaction: proline is first activated by ATP to form Pro-AMP and then transferred to the acceptor end of tRNA(Pro). As ProRS can inadvertently accommodate and process non-cognate amino acids such as alanine and cysteine, to avoid such errors it has two additional distinct editing activities against alanine. One activity is designated as 'pretransfer' editing and involves the tRNA(Pro)-independent hydrolysis of activated Ala-AMP. The other activity is designated 'posttransfer' editing and involves deacylation of mischarged Ala-tRNA(Pro). The misacylated Cys-tRNA(Pro) is not edited by ProRS. The sequence is that of Proline--tRNA ligase from Prochlorococcus marinus (strain SARG / CCMP1375 / SS120).